The following is a 65-amino-acid chain: MRCVPVFVILLLLIASAPSVDARLKTKDDMPLPSSHANIKRTLQMLRNKRCCPGWELCCEWDDGW.

The signal sequence occupies residues 1-19; sequence MRCVPVFVILLLLIASAPS. A propeptide spanning residues 20 to 48 is cleaved from the precursor; sequence VDARLKTKDDMPLPSSHANIKRTLQMLRN. Glutamate 60 carries the 4-carboxyglutamate modification.

The protein belongs to the conotoxin T superfamily. Post-translationally, contains 2 disulfide bonds that can be either 'C1-C3, C2-C4' or 'C1-C4, C2-C3', since these disulfide connectivities have been observed for conotoxins with cysteine framework V (for examples, see AC P0DQQ7 and AC P81755). In terms of tissue distribution, expressed by the venom duct.

Its subcellular location is the secreted. In Conus marmoreus (Marble cone), this protein is Conotoxin mr5.1b.